Here is a 154-residue protein sequence, read N- to C-terminus: Ascorbate-specific PTS system EIIA component (154 aa).

The PTS EIIA type-2 domain occupies 6 to 150 (SLAENNSIRL…QEVLDLIDRT (145 aa)). Histidine 68 serves as the catalytic Tele-phosphohistidine intermediate. Histidine 68 carries the phosphohistidine modification.

It localises to the cytoplasm. The phosphoenolpyruvate-dependent sugar phosphotransferase system (sugar PTS), a major carbohydrate active transport system, catalyzes the phosphorylation of incoming sugar substrates concomitantly with their translocation across the cell membrane. The enzyme II UlaABC PTS system is involved in ascorbate transport. This is Ascorbate-specific PTS system EIIA component (ulaC) from Salmonella paratyphi A (strain ATCC 9150 / SARB42).